The primary structure comprises 353 residues: Phosphate acyltransferase (353 aa).

The protein belongs to the PlsX family. In terms of assembly, homodimer. Probably interacts with PlsY.

Its subcellular location is the cytoplasm. The enzyme catalyses a fatty acyl-[ACP] + phosphate = an acyl phosphate + holo-[ACP]. The protein operates within lipid metabolism; phospholipid metabolism. Its function is as follows. Catalyzes the reversible formation of acyl-phosphate (acyl-PO(4)) from acyl-[acyl-carrier-protein] (acyl-ACP). This enzyme utilizes acyl-ACP as fatty acyl donor, but not acyl-CoA. This chain is Phosphate acyltransferase, found in Syntrophobacter fumaroxidans (strain DSM 10017 / MPOB).